Reading from the N-terminus, the 41-residue chain is MKVRNSLKSLKNRHRDCRVIRRRGRTYVINKTNRRFKARQG.

The protein belongs to the bacterial ribosomal protein bL36 family.

The sequence is that of Large ribosomal subunit protein bL36 from Erythrobacter litoralis (strain HTCC2594).